A 37-amino-acid chain; its full sequence is WNPFKELERAGQRVRDAIISAGPAVATVGQAAAIARG.

At Gly37 the chain carries Glycine amide.

The protein belongs to the cecropin family.

The protein localises to the secreted. Cecropins have lytic and antibacterial activity against several Gram-positive and Gram-negative bacteria. This Manduca sexta (Tobacco hawkmoth) protein is Bactericidin B-3.